A 122-amino-acid chain; its full sequence is MIQQESRLKVADNTGAKELLTIRVLGGSGRRYASIGDTIVATVKDALPGAGVKKGDIVKAVVVRTTKERRRPDGFYIRFDENAAVLIKDGGDPRGTRIFGPVGRELRDKKFMRIISLAPEVL.

It belongs to the universal ribosomal protein uL14 family. In terms of assembly, part of the 50S ribosomal subunit. Forms a cluster with proteins L3 and L19. In the 70S ribosome, L14 and L19 interact and together make contacts with the 16S rRNA in bridges B5 and B8.

Its function is as follows. Binds to 23S rRNA. Forms part of two intersubunit bridges in the 70S ribosome. The chain is Large ribosomal subunit protein uL14 from Thermobifida fusca (strain YX).